A 315-amino-acid polypeptide reads, in one-letter code: Ribosomal protein L11 methyltransferase (315 aa).

S-adenosyl-L-methionine is bound by residues T164, G185, D207, and N250.

Belongs to the methyltransferase superfamily. PrmA family.

Its subcellular location is the cytoplasm. It catalyses the reaction L-lysyl-[protein] + 3 S-adenosyl-L-methionine = N(6),N(6),N(6)-trimethyl-L-lysyl-[protein] + 3 S-adenosyl-L-homocysteine + 3 H(+). Methylates ribosomal protein L11. The chain is Ribosomal protein L11 methyltransferase from Exiguobacterium sibiricum (strain DSM 17290 / CCUG 55495 / CIP 109462 / JCM 13490 / 255-15).